We begin with the raw amino-acid sequence, 188 residues long: Sec-independent protein translocase protein TatB (188 aa).

Residues 1–21 (MFDIGWSELVVIGVVALVAIG) form a helical membrane-spanning segment. The disordered stretch occupies residues 147–188 (LPVPAETHALATTDLAPPDLAHPAPAHPEPTNSEPAKDAKAS). Over residues 160–170 (DLAPPDLAHPA) the composition is skewed to low complexity.

Belongs to the TatB family. The Tat system comprises two distinct complexes: a TatABC complex, containing multiple copies of TatA, TatB and TatC subunits, and a separate TatA complex, containing only TatA subunits. Substrates initially bind to the TatABC complex, which probably triggers association of the separate TatA complex to form the active translocon.

Its subcellular location is the cell inner membrane. Its function is as follows. Part of the twin-arginine translocation (Tat) system that transports large folded proteins containing a characteristic twin-arginine motif in their signal peptide across membranes. Together with TatC, TatB is part of a receptor directly interacting with Tat signal peptides. TatB may form an oligomeric binding site that transiently accommodates folded Tat precursor proteins before their translocation. The polypeptide is Sec-independent protein translocase protein TatB (Rhodopseudomonas palustris (strain HaA2)).